The primary structure comprises 365 residues: Growth-regulating factor 7 (365 aa).

In terms of domain architecture, QLQ spans 59-94; it reads PFTNAQLKELERQAMIYKYMIASIPVPFDLLVSSPS. The region spanning 107 to 151 is the WRC domain; the sequence is DLEPGRCRRTDGKKWRCAKEVVSNHKYCEKHLHRGRPRSRKHVEP. 2 short sequence motifs (bipartite nuclear localization signal) span residues 112–122 and 140–147; these read RCRRTDGKKWR and RGRPRSRK. The segment covering 137-147 has biased composition (basic residues); it reads HLHRGRPRSRK. 2 disordered regions span residues 137–187 and 332–365; these read HLHR…TLEP and IESYSLMETPTPSSSPSRVMKKMTSSVSDESSQV. The segment covering 337 to 365 has biased composition (polar residues); sequence LMETPTPSSSPSRVMKKMTSSVSDESSQV.

This sequence belongs to the GRF family.

The protein localises to the nucleus. Functionally, transcription activator that plays a role in the regulation of cell expansion in leaf and cotyledons tissues. Component of a network formed by miR396, the GRFs and their interacting factors (GIFs) acting in the regulation of meristem function, at least partially through the control of cell proliferation. The chain is Growth-regulating factor 7 (GRF7) from Arabidopsis thaliana (Mouse-ear cress).